Consider the following 511-residue polypeptide: Phospho-2-dehydro-3-deoxyheptonate aldolase 1, chloroplastic (511 aa).

A chloroplast-targeting transit peptide spans 1 to 49 (MALSNTLSLSSSKSLVQSHLLHNPTPQPRFSLFPTTQHGRRHPISAVHA).

It belongs to the class-II DAHP synthase family. As to expression, higher levels seen in the cotyledons than in the leaves and flowers. Lower levels seen in the roots and stems.

The protein localises to the plastid. It localises to the chloroplast. It catalyses the reaction D-erythrose 4-phosphate + phosphoenolpyruvate + H2O = 7-phospho-2-dehydro-3-deoxy-D-arabino-heptonate + phosphate. Its pathway is metabolic intermediate biosynthesis; chorismate biosynthesis; chorismate from D-erythrose 4-phosphate and phosphoenolpyruvate: step 1/7. In terms of biological role, may be involved in the synthesis of secondary metabolites derived from intermediates of the pre-chorismate pathway up to shikimate. The protein is Phospho-2-dehydro-3-deoxyheptonate aldolase 1, chloroplastic of Solanum lycopersicum (Tomato).